A 293-amino-acid chain; its full sequence is Membrane protein RL13 (293 aa).

Positions 1–19 (MHWHLAITWTVIILTFSEC) are cleaved as a signal peptide. The chain crosses the membrane as a helical span at residues 245 to 265 (IPLGIHAVWAGIVVSVALIAL).

The protein resides in the virion membrane. In terms of biological role, may play a role in modifying tropism or in modulating cell signaling during virus entry. Since RL13 expression severely impairs HCMV replication in epithelial cell cultures, it may act as a regulator promoting persistence by suppressing the switch to fully lytic infection. The polypeptide is Membrane protein RL13 (RL13) (Human cytomegalovirus (strain Merlin) (HHV-5)).